Consider the following 147-residue polypeptide: uncharacterized protein (147 aa).

This is an uncharacterized protein from Human cytomegalovirus (strain AD169) (HHV-5).